The following is a 341-amino-acid chain: Basic membrane protein B (341 aa).

The first 14 residues, 1 to 14 (MRIVIFILGILLTS), serve as a signal peptide directing secretion. The N-palmitoyl cysteine moiety is linked to residue C15. C15 carries S-diacylglycerol cysteine lipidation.

The protein belongs to the BMP lipoprotein family. As to quaternary structure, monomer.

The protein localises to the cell inner membrane. Its function is as follows. May be part of an ABC-type nucleoside uptake system involved in the purine salvage pathway. This chain is Basic membrane protein B (bmpB), found in Borrelia garinii subsp. bavariensis (strain ATCC BAA-2496 / DSM 23469 / PBi) (Borreliella bavariensis).